Here is a 118-residue protein sequence, read N- to C-terminus: Group 1 truncated hemoglobin GlbN (118 aa).

Position 70 (His-70) interacts with heme.

The protein belongs to the truncated hemoglobin family. Group I subfamily. In terms of assembly, monomer. The cofactor is heme.

Its subcellular location is the membrane. The sequence is that of Group 1 truncated hemoglobin GlbN (glbN) from Nostoc sp. (strain MUN 8820).